Consider the following 323-residue polypeptide: Sphingolipid delta(4)-desaturase DES1 (323 aa).

The N-myristoyl glycine moiety is linked to residue Gly-2. The next 2 helical transmembrane spans lie at 41-61 (PNLI…FYIV) and 68-88 (WVIF…TLGI). A Histidine box-1 motif is present at residues 89-93 (HEIAH). The chain crosses the membrane as a helical span at residues 107-127 (WFGMFANLPIGIPYSVSFKSY). The Histidine box-2 signature appears at 128–132 (HMDHH). Transmembrane regions (helical) follow at residues 152–172 (FFCT…FYAF), 184–204 (YLEV…YYFL), and 209–229 (LVYM…SGHF). A Histidine box-3 motif is present at residues 259–263 (HNEHH). The residue at position 307 (Ser-307) is a Phosphoserine.

The protein belongs to the fatty acid desaturase type 1 family. DEGS subfamily. As to quaternary structure, interacts with RLBP1; the interaction increases synthesis of chromophore-precursors by DEGS1. In terms of processing, myristoylation can target the enzyme to the mitochondria leading to an increase in ceramide levels.

Its subcellular location is the mitochondrion membrane. It is found in the endoplasmic reticulum membrane. The enzyme catalyses an N-acylsphinganine + 2 Fe(II)-[cytochrome b5] + O2 + 2 H(+) = an N-acylsphing-4-enine + 2 Fe(III)-[cytochrome b5] + 2 H2O. The catalysed reaction is all-trans-retinol = 11-cis-retinol. It catalyses the reaction all-trans-retinol = 9-cis-retinol. It carries out the reaction all-trans-retinol = 13-cis-retinol. The enzyme catalyses 11-cis-retinol = 13-cis-retinol. The catalysed reaction is 11-cis-retinol = 9-cis-retinol. In terms of biological role, has sphingolipid-delta-4-desaturase activity. Converts D-erythro-sphinganine to D-erythro-sphingosine (E-sphing-4-enine). Catalyzes the equilibrium isomerization of retinols. This chain is Sphingolipid delta(4)-desaturase DES1 (DEGS1), found in Pongo abelii (Sumatran orangutan).